Here is a 196-residue protein sequence, read N- to C-terminus: Late protein I196L (196 aa).

Repeat copies occupy residues 28 to 48 (SIYL…PTTS) and 49 to 70 (SNSL…TTTS). One copy of the 3; approximate repeat lies at 71 to 92 (SNYLTSAISTNISDKEEDTPFS).

The protein belongs to the asfivirus I196L family.

This is Late protein I196L from African swine fever virus (isolate Warthog/Namibia/Wart80/1980) (ASFV).